We begin with the raw amino-acid sequence, 175 residues long: Sec-independent protein translocase protein TatB (175 aa).

The chain crosses the membrane as a helical span at residues 1–21 (MLDLGLSKMALIGVVALVVLG). The segment covering 99-115 (GDPAAADASGGLGATSD) has biased composition (low complexity). Positions 99 to 118 (GDPAAADASGGLGATSDEPS) are disordered.

Belongs to the TatB family. As to quaternary structure, the Tat system comprises two distinct complexes: a TatABC complex, containing multiple copies of TatA, TatB and TatC subunits, and a separate TatA complex, containing only TatA subunits. Substrates initially bind to the TatABC complex, which probably triggers association of the separate TatA complex to form the active translocon.

It localises to the cell inner membrane. In terms of biological role, part of the twin-arginine translocation (Tat) system that transports large folded proteins containing a characteristic twin-arginine motif in their signal peptide across membranes. Together with TatC, TatB is part of a receptor directly interacting with Tat signal peptides. TatB may form an oligomeric binding site that transiently accommodates folded Tat precursor proteins before their translocation. The chain is Sec-independent protein translocase protein TatB from Burkholderia thailandensis (strain ATCC 700388 / DSM 13276 / CCUG 48851 / CIP 106301 / E264).